The primary structure comprises 416 residues: Probable glucan 1,3-beta-glucosidase A (416 aa).

An N-terminal signal peptide occupies residues Met-1 to Ala-22. Glu-211 acts as the Proton donor in catalysis. Disulfide bonds link Cys-291/Cys-415 and Cys-316/Cys-342. Residue Glu-308 is the Nucleophile of the active site. The N-linked (GlcNAc...) asparagine glycan is linked to Asn-344.

Belongs to the glycosyl hydrolase 5 (cellulase A) family. Monomer. It depends on Mn(2+) as a cofactor.

It is found in the secreted. It catalyses the reaction Successive hydrolysis of beta-D-glucose units from the non-reducing ends of (1-&gt;3)-beta-D-glucans, releasing alpha-glucose.. In terms of biological role, beta-glucanases participate in the metabolism of beta-glucan, the main structural component of the cell wall. It could also function biosynthetically as a transglycosylase. The protein is Probable glucan 1,3-beta-glucosidase A (exgA) of Aspergillus fumigatus (strain CBS 144.89 / FGSC A1163 / CEA10) (Neosartorya fumigata).